Here is a 309-residue protein sequence, read N- to C-terminus: Acetylglutamate kinase (309 aa).

Substrate is bound by residues Gly-82 to Gly-83, Arg-104, and Asn-206.

Belongs to the acetylglutamate kinase family. ArgB subfamily.

It localises to the cytoplasm. It catalyses the reaction N-acetyl-L-glutamate + ATP = N-acetyl-L-glutamyl 5-phosphate + ADP. The protein operates within amino-acid biosynthesis; L-arginine biosynthesis; N(2)-acetyl-L-ornithine from L-glutamate: step 2/4. In terms of biological role, catalyzes the ATP-dependent phosphorylation of N-acetyl-L-glutamate. The polypeptide is Acetylglutamate kinase (Cupriavidus metallidurans (strain ATCC 43123 / DSM 2839 / NBRC 102507 / CH34) (Ralstonia metallidurans)).